Reading from the N-terminus, the 113-residue chain is Transcriptional regulator RamA (113 aa).

The 99-residue stretch at 9 to 107 (DTIVEWIDDN…NLPPGAYRKE (99 aa)) folds into the HTH araC/xylS-type domain. 2 consecutive DNA-binding regions (H-T-H motif) follow at residues 26-47 (DDIA…MQYK) and 74-97 (VYDI…TRTF).

In terms of biological role, transcriptional regulator. Binds to regulatory regions of target genes, including efflux pump operon acrAB and outer membrane protein gene tolC. Represses transcription of genes belonging to the flagellar regulon, including flhD, flhB and fliC; probably thereby leading to repression of motility. Represses expression of the flhDC operon in a post-transcriptional manner. Activates expression of acrAB, perhaps thereby conferring multidrug resistance. Involved in indole- and bile-mediated regulation of acrAB; binding of bile to RamA may contribute to activation of expression of acrAB. Plays a role in regulating virulence in mice. The polypeptide is Transcriptional regulator RamA (Salmonella typhimurium (strain LT2 / SGSC1412 / ATCC 700720)).